The sequence spans 438 residues: 3-phosphoshikimate 1-carboxyvinyltransferase (438 aa).

3-phosphoshikimate-binding residues include K21, S22, and R26. K21 is a binding site for phosphoenolpyruvate. Phosphoenolpyruvate contacts are provided by G95 and R123. 3-phosphoshikimate is bound by residues S167, Q169, D315, and K342. Residue Q169 participates in phosphoenolpyruvate binding. The Proton acceptor role is filled by D315. 2 residues coordinate phosphoenolpyruvate: R346 and R387.

It belongs to the EPSP synthase family. Monomer.

The protein localises to the cytoplasm. The enzyme catalyses 3-phosphoshikimate + phosphoenolpyruvate = 5-O-(1-carboxyvinyl)-3-phosphoshikimate + phosphate. Its pathway is metabolic intermediate biosynthesis; chorismate biosynthesis; chorismate from D-erythrose 4-phosphate and phosphoenolpyruvate: step 6/7. Catalyzes the transfer of the enolpyruvyl moiety of phosphoenolpyruvate (PEP) to the 5-hydroxyl of shikimate-3-phosphate (S3P) to produce enolpyruvyl shikimate-3-phosphate and inorganic phosphate. This Coxiella burnetii (strain CbuK_Q154) (Coxiella burnetii (strain Q154)) protein is 3-phosphoshikimate 1-carboxyvinyltransferase.